A 443-amino-acid polypeptide reads, in one-letter code: Trigger factor (443 aa).

The 87-residue stretch at 163-249 folds into the PPIase FKBP-type domain; the sequence is KDAAIIDYQA…LKSLKEEILP (87 aa).

It belongs to the FKBP-type PPIase family. Tig subfamily.

Its subcellular location is the cytoplasm. It catalyses the reaction [protein]-peptidylproline (omega=180) = [protein]-peptidylproline (omega=0). In terms of biological role, involved in protein export. Acts as a chaperone by maintaining the newly synthesized protein in an open conformation. Functions as a peptidyl-prolyl cis-trans isomerase. This chain is Trigger factor, found in Desulfosudis oleivorans (strain DSM 6200 / JCM 39069 / Hxd3) (Desulfococcus oleovorans).